A 417-amino-acid chain; its full sequence is MARKIGSRYTAHQILGRGSAGTVWLGEGPDGPVAIKLLREDLASDQELVSRFVQERTALLGLDHPHVVSVRDLVVDGNDLALVMDLVRGTDLRTRLDRERRLAPEAAVAVVADVADGLAAAHAAGVVHRDVKPENVLLDMQGPLGPGGSHPALLTDFGVAKLIDTPRRTRATKIIGTPDYLAPEIVEGLPPRAAVDIYALATVLYELLAGFTPFGGGHPGAVLRRHVTETVVPLPGIPDELWQLLVQCLAKAPASRLRASELSARLRELLPMLAGMAPLDVDEPDAEQPEDAPDASAASPAAPVSTAEPVRRRGAVPLVPGAKPADSNRDTHTSMRVPAPDELAGGARGTARAPRASGAPRPGSARNRAATRRRRIAVGAGAVALVAAIGVGTWLATGGDEDGGGPQDTRNSAPAAP.

The Protein kinase domain maps to 9–270; sequence YTAHQILGRG…ELSARLRELL (262 aa). ATP-binding positions include 15-23 and Lys36; that span reads LGRGSAGTV. Asp130 (proton acceptor) is an active-site residue. 2 disordered regions span residues 279 to 371 and 395 to 417; these read LDVD…RAAT and LATGGDEDGGGPQDTRNSAPAAP. The segment covering 280 to 293 has biased composition (acidic residues); sequence DVDEPDAEQPEDAP. 2 stretches are compositionally biased toward low complexity: residues 294–308 and 349–368; these read DASAASPAAPVSTAE and GTARAPRASGAPRPGSARNR. Residues 408–417 are compositionally biased toward polar residues; the sequence is DTRNSAPAAP.

The protein belongs to the protein kinase superfamily. Ser/Thr protein kinase family. Autophosphorylated mainly at Thr.

It catalyses the reaction L-seryl-[protein] + ATP = O-phospho-L-seryl-[protein] + ADP + H(+). It carries out the reaction L-threonyl-[protein] + ATP = O-phospho-L-threonyl-[protein] + ADP + H(+). This is Serine/threonine-protein kinase PkaB (pkaB) from Streptomyces coelicolor (strain ATCC BAA-471 / A3(2) / M145).